The sequence spans 375 residues: Killer cell immunoglobulin-like receptor 2DL5A (375 aa).

Residues 1-21 (MSLMVISMACVGFFLLQGAWT) form the signal peptide. Over 22–238 (HEGGQDKPLL…PSSKTGIRRH (217 aa)) the chain is Extracellular. 2 Ig-like C2-type domains span residues 42 to 102 (GGHV…HPRS) and 137 to 200 (GENV…LHDS). C49 and C95 are oxidised to a cystine. Residues N139, N173, and N218 are each glycosylated (N-linked (GlcNAc...) asparagine). Residues C144 and C193 are joined by a disulfide bond. A disordered region spans residues 213-233 (VSVTGNSSSSSSSPTEPSSKT). Low complexity predominate over residues 219 to 231 (SSSSSSSPTEPSS). A helical membrane pass occupies residues 239–259 (LHILIGTSVAIILFIILFFFL). The Cytoplasmic portion of the chain corresponds to 260-375 (LHCCCSNKKN…ASSHVPAAGI (116 aa)). The segment at 334-375 (AKPRSLSPAHKHHSQALRGSSRETTALSQNRVASSHVPAAGI) is disordered. Residues 355–366 (RETTALSQNRVA) are compositionally biased toward polar residues.

Belongs to the immunoglobulin superfamily.

It localises to the cell membrane. Its function is as follows. Receptor on natural killer (NK) cells for HLA-C alleles. Inhibits the activity of NK cells thus preventing cell lysis. In Homo sapiens (Human), this protein is Killer cell immunoglobulin-like receptor 2DL5A (KIR2DL5A).